Here is a 390-residue protein sequence, read N- to C-terminus: Bibenzyl synthase (390 aa).

Cysteine 164 is an active-site residue.

It belongs to the thiolase-like superfamily. Chalcone/stilbene synthases family.

It catalyses the reaction 3-(3-hydroxyphenyl)-propanoyl-CoA + 3 malonyl-CoA + 3 H(+) = 3,3',5-trihydroxybibenzyl + 4 CO2 + 4 CoA. The chain is Bibenzyl synthase (BIBSY212) from Phalaenopsis sp. (Moth orchid).